The following is a 451-amino-acid chain: uncharacterized protein (451 aa).

The segment at 415–435 (AHGDTEWLPPPHLDHGQPRVN) is disordered.

It belongs to the Rv1128c/1148c/1588c/1702c/1945/3466 family.

This is an uncharacterized protein from Mycobacterium tuberculosis (strain ATCC 25618 / H37Rv).